We begin with the raw amino-acid sequence, 275 residues long: Transmembrane protein 106B (275 aa).

The tract at residues 1-24 (MGKSFSHLPLHSNKEDGYDGMTST) is disordered. A lipid anchor (N-myristoyl glycine) is attached at Gly2. Topologically, residues 2–97 (GKSFSHLPLH…QRLRPRRTKL (96 aa)) are cytoplasmic. A helical transmembrane segment spans residues 98-118 (YVMASVFVCLLLSGLAVFFLF). At 119-275 (PRSIDVKYIG…EYLNVLQPQQ (157 aa)) the chain is on the lumenal side. N-linked (GlcNAc...) asparagine glycans are attached at residues Asn146, Asn152, Asn165, and Asn184. A disulfide bridge connects residues Cys215 and Cys254. An N-linked (GlcNAc...) asparagine glycan is attached at Asn257.

It belongs to the TMEM106 family. As to quaternary structure, can form homomers. Interacts (via N-terminus) with MAP6 (via C-terminus). Interacts (via C-terminus) with the vacuolar-type ATPase subunit ATP6AP1. Interacts (via N-terminus) with AP2M1 and CLTC. Interacts with TMEM106C.

The protein resides in the late endosome membrane. The protein localises to the lysosome membrane. It localises to the cell membrane. Its function is as follows. In neurons, involved in the transport of late endosomes/lysosomes. May be involved in dendrite morphogenesis and maintenance by regulating lysosomal trafficking. May act as a molecular brake for retrograde transport of late endosomes/lysosomes, possibly via its interaction with MAP6. In motoneurons, may mediate the axonal transport of lysosomes and axonal sorting at the initial segment. It remains unclear whether TMEM106B affects the transport of moving lysosomes in the anterograde or retrograde direction in neurites and whether it is particularly important in the sorting of lysosomes in axons or in dendrites. In neurons, may also play a role in the regulation of lysosomal size and responsiveness to stress. Required for proper lysosomal acidification. This chain is Transmembrane protein 106B (TMEM106B), found in Bos taurus (Bovine).